The following is a 748-amino-acid chain: Catalase-peroxidase (748 aa).

Over residues 1–16 (MSSDTSASRPPQPDTR) the composition is skewed to polar residues. The disordered stretch occupies residues 1–43 (MSSDTSASRPPQPDTRTASKSESENPAIPSPHPKSNAPLTNRD). The tryptophyl-tyrosyl-methioninium (Trp-Tyr) (with M-264) cross-link spans 113 to 238 (WHAAGTYRIH…YGATTMGLIY (126 aa)). H114 functions as the Proton acceptor in the catalytic mechanism. The segment at residues 238-264 (YVNPEGPEGKPDPIAAAIDIRETFGRM) is a cross-link (tryptophyl-tyrosyl-methioninium (Tyr-Met) (with W-113)). H279 is a binding site for heme b.

It belongs to the peroxidase family. Peroxidase/catalase subfamily. In terms of assembly, homodimer or homotetramer. Heme b serves as cofactor. In terms of processing, formation of the three residue Trp-Tyr-Met cross-link is important for the catalase, but not the peroxidase activity of the enzyme.

It carries out the reaction H2O2 + AH2 = A + 2 H2O. The catalysed reaction is 2 H2O2 = O2 + 2 H2O. Bifunctional enzyme with both catalase and broad-spectrum peroxidase activity. This chain is Catalase-peroxidase, found in Mycolicibacterium paratuberculosis (strain ATCC BAA-968 / K-10) (Mycobacterium paratuberculosis).